Consider the following 242-residue polypeptide: Fibrinolytic enzyme, isozyme C (242 aa).

The 242-residue stretch at 1–242 (VIGGTNASPG…YLGWIGDNSR (242 aa)) folds into the Peptidase S1 domain. A disulfide bond links Cys-29 and Cys-45. Residues His-44 and Asp-93 each act as charge relay system in the active site. Cystine bridges form between Cys-127-Cys-197, Cys-158-Cys-176, and Cys-187-Cys-219. Residue Ser-191 is the Charge relay system of the active site.

This sequence belongs to the peptidase S1 family.

The chain is Fibrinolytic enzyme, isozyme C from Lumbricus rubellus (Humus earthworm).